A 293-amino-acid polypeptide reads, in one-letter code: NAD-dependent protein deacetylase (293 aa).

The Deacetylase sirtuin-type domain occupies 1–284 (MTVAITQTGP…QPPDPLHTAT (284 aa)). Residues 27 to 47 (GAGCSTDSGIPDYRDLQGGWK) and 105 to 108 (QNVD) each bind NAD(+). Catalysis depends on His-123, which acts as the Proton acceptor. Zn(2+) contacts are provided by Cys-131, Cys-134, Cys-182, and Cys-185. Residues 222 to 224 (GSS), 248 to 250 (NFG), and Cys-266 each bind NAD(+).

It belongs to the sirtuin family. Class II subfamily. Requires Zn(2+) as cofactor.

The protein localises to the cytoplasm. The catalysed reaction is N(6)-acetyl-L-lysyl-[protein] + NAD(+) + H2O = 2''-O-acetyl-ADP-D-ribose + nicotinamide + L-lysyl-[protein]. NAD-dependent protein deacetylase which modulates the activities of several enzymes which are inactive in their acetylated form. This chain is NAD-dependent protein deacetylase, found in Xanthomonas campestris pv. campestris (strain 8004).